Here is an 845-residue protein sequence, read N- to C-terminus: Protein translocase subunit SecA (845 aa).

ATP is bound by residues Gln85, Gly103–Thr107, and Asp492. The interval Arg787–Ala845 is disordered. Residues Cys829, Cys831, Cys840, and His841 each coordinate Zn(2+). A compositionally biased stretch (basic residues) spans Lys835 to Ala845.

The protein belongs to the SecA family. Monomer and homodimer. Part of the essential Sec protein translocation apparatus which comprises SecA, SecYEG and auxiliary proteins SecDF. Other proteins may also be involved. Zn(2+) is required as a cofactor.

The protein localises to the cell membrane. It localises to the cytoplasm. The enzyme catalyses ATP + H2O + cellular proteinSide 1 = ADP + phosphate + cellular proteinSide 2.. Part of the Sec protein translocase complex. Interacts with the SecYEG preprotein conducting channel. Has a central role in coupling the hydrolysis of ATP to the transfer of proteins into and across the cell membrane, serving as an ATP-driven molecular motor driving the stepwise translocation of polypeptide chains across the membrane. This Enterococcus faecalis (strain ATCC 700802 / V583) protein is Protein translocase subunit SecA.